The following is a 299-amino-acid chain: Tyrosine recombinase XerC (299 aa).

One can recognise a Core-binding (CB) domain in the interval 1–85 (MERQLDAYCE…AVRGLYHYLN (85 aa)). The Tyr recombinase domain maps to 106 to 285 (RLPKTLDTDR…DFQHLATVYD (180 aa)). Active-site residues include Arg146, Lys170, His237, Arg240, and His263. Tyr272 (O-(3'-phospho-DNA)-tyrosine intermediate) is an active-site residue.

This sequence belongs to the 'phage' integrase family. XerC subfamily. In terms of assembly, forms a cyclic heterotetrameric complex composed of two molecules of XerC and two molecules of XerD.

The protein localises to the cytoplasm. Its function is as follows. Site-specific tyrosine recombinase, which acts by catalyzing the cutting and rejoining of the recombining DNA molecules. The XerC-XerD complex is essential to convert dimers of the bacterial chromosome into monomers to permit their segregation at cell division. It also contributes to the segregational stability of plasmids. This is Tyrosine recombinase XerC from Pseudomonas fluorescens.